Here is a 615-residue protein sequence, read N- to C-terminus: Delta(14)-sterol reductase LBR (615 aa).

A Tudor domain is found at 1-62 (MPSRKFADGE…DIKPLTSFRQ (62 aa)). Topologically, residues 1-211 (MPSRKFADGE…IRAKDLEFGG (211 aa)) are nuclear. The tract at residues 53–109 (DIKPLTSFRQRKGGSTSSSPSRRRGSRSRSRSRSPGRPPKSARRSASASHQADIKEA) is disordered. At Lys-55 the chain carries N6-acetyllysine. Thr-58 bears the Phosphothreonine mark. A phosphoserine mark is found at Ser-59 and Ser-67. Phosphoserine; by CDK1 occurs at positions 71 and 86. The segment covering 73–86 (SRRRGSRSRSRSRS) has biased composition (basic residues). 2 positions are modified to phosphoserine: Ser-97 and Ser-99. Position 118 is a phosphothreonine (Thr-118). Ser-128 is modified (phosphoserine). Position 200 is a phosphothreonine (Thr-200). A run of 8 helical transmembrane segments spans residues 212 to 232 (VPGV…LLLM), 258 to 278 (VFGV…LPIG), 299 to 319 (FYAF…GVEF), 326 to 346 (FLQF…YLYM), 415 to 435 (VPSL…VDAL), 447 to 467 (IIHD…VPFI), 481 to 501 (EVSW…YVIF), and 561 to 581 (ACGF…MLLV). Residues Lys-594 and Lys-601 each carry the N6-acetyllysine modification.

This sequence belongs to the ERG4/ERG24 family. In terms of assembly, interacts with CBX5. Interacts with DNA. Interaction with DNA is sequence independent with higher affinity for supercoiled and relaxed circular DNA than linear DNA. Interacts with lamin B. Interacts with CLNK. Interacts with TMEM147; promoting LBR localization to the nucleus inner membrane. Post-translationally, phosphorylated by CDK1 in mitosis when the inner nuclear membrane breaks down into vesicles that dissociate from the lamina and the chromatin. It is phosphorylated by different protein kinases in interphase when the membrane is associated with these structures. Phosphorylation of LBR and HP1 proteins may be responsible for some of the alterations in chromatin organization and nuclear structure which occur at various times during the cell cycle. Phosphorylated by SRPK1. In late anaphase LBR is dephosphorylated, probably by PP1 and/or PP2A, allowing reassociation with chromatin.

It localises to the nucleus inner membrane. The protein localises to the nucleus. It is found in the cytoplasm. The protein resides in the endoplasmic reticulum membrane. The catalysed reaction is 5alpha-cholest-8,14-dien-3beta-ol + NADPH + H(+) = 5alpha-cholest-8-en-3beta-ol + NADP(+). The enzyme catalyses 4,4-dimethyl-5alpha-cholesta-8,24-dien-3beta-ol + NADP(+) = 4,4-dimethyl-5alpha-cholesta-8,14,24-trien-3beta-ol + NADPH + H(+). It catalyses the reaction 4,4-dimethyl-8,14-cholestadien-3beta-ol + NADPH + H(+) = 4,4-dimethyl-5alpha-cholest-8-en-3beta-ol + NADP(+). It participates in steroid biosynthesis; cholesterol biosynthesis. Its function is as follows. Catalyzes the reduction of the C14-unsaturated bond of lanosterol, as part of the metabolic pathway leading to cholesterol biosynthesis. Plays a critical role in myeloid cell cholesterol biosynthesis which is essential to both myeloid cell growth and functional maturation. Mediates the activation of NADPH oxidases, perhaps by maintaining critical levels of cholesterol required for membrane lipid raft formation during neutrophil differentiation. Anchors the lamina and the heterochromatin to the inner nuclear membrane. The sequence is that of Delta(14)-sterol reductase LBR (LBR) from Pongo abelii (Sumatran orangutan).